A 379-amino-acid polypeptide reads, in one-letter code: S-(hydroxymethyl)glutathione dehydrogenase (379 aa).

A Zn(2+)-binding site is contributed by cysteine 47. Histidine 48 contributes to the NAD(+) binding site. 7 residues coordinate Zn(2+): histidine 69, glutamate 70, cysteine 99, cysteine 102, cysteine 105, cysteine 113, and cysteine 176. Residues 201–206 (GAGCIG), aspartate 225, and 296–298 (IGV) each bind NAD(+).

The protein belongs to the zinc-containing alcohol dehydrogenase family. Class-III subfamily. Requires Zn(2+) as cofactor.

It catalyses the reaction a primary alcohol + NAD(+) = an aldehyde + NADH + H(+). It carries out the reaction a secondary alcohol + NAD(+) = a ketone + NADH + H(+). The catalysed reaction is S-(hydroxymethyl)glutathione + NADP(+) = S-formylglutathione + NADPH + H(+). The enzyme catalyses S-(hydroxymethyl)glutathione + NAD(+) = S-formylglutathione + NADH + H(+). It catalyses the reaction S-nitrosoglutathione + NADH + H(+) = S-(hydroxysulfenamide)glutathione + NAD(+). In terms of biological role, oxidizes long-chain alcohols and, in the presence of glutathione, is able to oxidize formaldehyde. Also acts as a S-nitroso-glutathione reductase by catalyzing the NADH-dependent reduction of S-nitrosoglutathione, thereby regulating protein S-nitrosylation. The protein is S-(hydroxymethyl)glutathione dehydrogenase (FLD1) of Komagataella pastoris (Yeast).